The sequence spans 115 residues: uncharacterized protein (115 aa).

3 helical membrane-spanning segments follow: residues 1 to 21 (MFLAGVLCMCAAAASALFGSW), 33 to 53 (ALALRAMAPTQLAAAVMLAAG), and 54 to 74 (GVVAVAAPGHTALMVVIVCIA).

This sequence to M.leprae ML0030.

The protein localises to the cell membrane. This is an uncharacterized protein from Mycobacterium tuberculosis (strain CDC 1551 / Oshkosh).